Consider the following 148-residue polypeptide: Deoxyuridine 5'-triphosphate nucleotidohydrolase (148 aa).

Substrate contacts are provided by residues 67 to 69, Asn80, 84 to 86, and Met94; these read RSG and LID.

It belongs to the dUTPase family. It depends on Mg(2+) as a cofactor.

It carries out the reaction dUTP + H2O = dUMP + diphosphate + H(+). The protein operates within pyrimidine metabolism; dUMP biosynthesis; dUMP from dCTP (dUTP route): step 2/2. Functionally, this enzyme is involved in nucleotide metabolism: it produces dUMP, the immediate precursor of thymidine nucleotides and it decreases the intracellular concentration of dUTP so that uracil cannot be incorporated into DNA. The chain is Deoxyuridine 5'-triphosphate nucleotidohydrolase from Francisella tularensis subsp. holarctica (strain FTNF002-00 / FTA).